The following is a 355-amino-acid chain: Uroporphyrinogen decarboxylase (355 aa).

Residues 27-31 (RQAGR), F46, D77, Y154, T209, and H328 contribute to the substrate site.

This sequence belongs to the uroporphyrinogen decarboxylase family. As to quaternary structure, homodimer.

The protein resides in the cytoplasm. The enzyme catalyses uroporphyrinogen III + 4 H(+) = coproporphyrinogen III + 4 CO2. It functions in the pathway porphyrin-containing compound metabolism; protoporphyrin-IX biosynthesis; coproporphyrinogen-III from 5-aminolevulinate: step 4/4. In terms of biological role, catalyzes the decarboxylation of four acetate groups of uroporphyrinogen-III to yield coproporphyrinogen-III. This chain is Uroporphyrinogen decarboxylase, found in Vibrio vulnificus (strain CMCP6).